Consider the following 120-residue polypeptide: U13-lycotoxin-Ls1a (120 aa).

The first 16 residues, Met1–Cys16, serve as a signal peptide directing secretion. The propeptide occupies Phe17–Arg54. 4 cysteine pairs are disulfide-bonded: Cys56–Cys70, Cys63–Cys76, Cys69–Cys87, and Cys78–Cys85. The 40-residue stretch at Cys56–Cys95 folds into the Agouti domain.

This sequence belongs to the neurotoxin 05 (agouti) family. Post-translationally, contains 6 disulfide bonds. As to expression, expressed by the venom gland.

The protein localises to the secreted. The sequence is that of U13-lycotoxin-Ls1a from Lycosa singoriensis (Wolf spider).